A 748-amino-acid polypeptide reads, in one-letter code: Malate synthase G (748 aa).

Residues valine 141, 148-149 (RF), serine 298, and arginine 335 each bind acetyl-CoA. The active-site Proton acceptor is the arginine 362. Residues arginine 362, glutamate 453, and 478–481 (GFLD) each bind glyoxylate. Glutamate 453 and aspartate 481 together coordinate Mg(2+). Proline 562 lines the acetyl-CoA pocket. Cysteine 639 carries the cysteine sulfenic acid (-SOH) modification. Aspartate 653 serves as the catalytic Proton donor.

Belongs to the malate synthase family. GlcB subfamily. In terms of assembly, monomer. It depends on Mg(2+) as a cofactor.

It is found in the cytoplasm. It carries out the reaction glyoxylate + acetyl-CoA + H2O = (S)-malate + CoA + H(+). It participates in carbohydrate metabolism; glyoxylate cycle; (S)-malate from isocitrate: step 2/2. In terms of biological role, involved in the glycolate utilization. Catalyzes the condensation and subsequent hydrolysis of acetyl-coenzyme A (acetyl-CoA) and glyoxylate to form malate and CoA. In Corynebacterium efficiens (strain DSM 44549 / YS-314 / AJ 12310 / JCM 11189 / NBRC 100395), this protein is Malate synthase G.